A 473-amino-acid chain; its full sequence is Myocyte-specific enhancer factor 2C (473 aa).

The MADS-box domain maps to 3-57 (RKKIQITRIMDERNRQVTFTKRKFGLMKKAYELSVLCDCEIALIIFNSTNKLFQY). Position 4 is an N6-acetyllysine (K4). Positions 58–86 (ASTDMDKVLLKYTEYNEPHESRTNSDIVE) form a DNA-binding region, mef2-type. A Phosphoserine; by CK2 modification is found at S59. Positions 91–116 (KGLNGCDSPDPDADDSVGHSPESEDK) are disordered. Residues S98, S106, and S110 each carry the phosphoserine modification. N6-acetyllysine is present on residues K116 and K119. The interval 180 to 224 (NSMSPGVTHRPPSAGNTGGLMGGDLTSGAGTSAGNGYGNPRNSPG) is disordered. Phosphoserine is present on residues S222 and S228. K234 and K239 each carry N6-acetyllysine. Position 240 is a phosphoserine (S240). 2 positions are modified to N6-acetyllysine: K252 and K264. Positions 271-278 (SEDVDLLL) are beta domain. T293 and T300 each carry phosphothreonine; by MAPK14. The segment at 368–399 (ACTSTHLSQSSNLSLPSTQSLNIKSEPVSPPR) is transcription repressor. Over residues 375–390 (SQSSNLSLPSTQSLNI) the composition is skewed to polar residues. The tract at residues 375-473 (SQSSNLSLPS…RMRLSEGWAT (99 aa)) is disordered. A Glycyl lysine isopeptide (Lys-Gly) (interchain with G-Cter in SUMO) cross-link involves residue K391. Phosphoserine; by CDK5 is present on S396. Position 419 is a phosphoserine; by MAPK7 (S419). Residues 419–432 (SPVDSLSSCSSSYD) show a composition bias toward low complexity. Residues 433 to 443 (GSDREDHRNEF) are compositionally biased toward basic and acidic residues. At S445 the chain carries Phosphoserine.

The protein belongs to the MEF2 family. In terms of assembly, forms a complex with class II HDACs in undifferentiating cells. On myogenic differentiation, HDACs are released into the cytoplasm allowing MEF2s to interact with other proteins for activation. Interacts with EP300 in differentiating cells; the interaction acetylates MEF2C leading to increased DNA binding and activation. Interacts with HDAC7 and CARM1. Interacts with HDAC4 and HDAC9; the interaction with HDACs represses transcriptional activity. Interacts with LPIN1. Interacts with MYOCD. Interacts with AKAP13. Interacts with FOXK1; the interaction inhibits MEF2C transactivation activity. Interacts (via N-terminus) with HABP4; this interaction decreases DNA-binding activity of MEF2C in myocardial cells in response to mechanical stress. Interacts with JPH2; interaction specifically takes place with the Junctophilin-2 N-terminal fragment cleavage product of JPH2. Interacts (via MADS box) with SOX18. Interacts with PHF7; the interaction promotes MEF2C binding to its transcription targets. Phosphorylation on Ser-59 enhances DNA binding activity. Phosphorylation on Ser-396 is required for Lys-391 sumoylation and inhibits transcriptional activity. Post-translationally, acetylated by p300 on several sites in diffentiating myocytes. Acetylation on Lys-4 increases DNA binding and transactivation. In terms of processing, sumoylated on Lys-391 with SUMO2 but not by SUMO1 represses transcriptional activity. Proteolytically cleaved in cerebellar granule neurons, probably by caspase 7, following neurotoxicity. Preferentially cleaves the CDK5-mediated hyperphosphorylated form which leads to neuron apoptosis and transcriptional inactivation. In terms of tissue distribution, expressed in brain and skeletal muscle.

Its subcellular location is the nucleus. It is found in the cytoplasm. The protein localises to the sarcoplasm. Its function is as follows. Transcription activator which binds specifically to the MEF2 element present in the regulatory regions of many muscle-specific genes. Controls cardiac morphogenesis and myogenesis, and is also involved in vascular development. Enhances transcriptional activation mediated by SOX18. Plays an essential role in hippocampal-dependent learning and memory by suppressing the number of excitatory synapses and thus regulating basal and evoked synaptic transmission. Crucial for normal neuronal development, distribution, and electrical activity in the neocortex. Necessary for proper development of megakaryocytes and platelets and for bone marrow B-lymphopoiesis. Required for B-cell survival and proliferation in response to BCR stimulation, efficient IgG1 antibody responses to T-cell-dependent antigens and for normal induction of germinal center B-cells. May also be involved in neurogenesis and in the development of cortical architecture. Isoforms that lack the repressor domain are more active than isoform 1. In Homo sapiens (Human), this protein is Myocyte-specific enhancer factor 2C.